The chain runs to 125 residues: Histone H1-like protein Hc1 (125 aa).

Positions 98-125 (TKAKVKPTKKAAPKTKVKTAKKTRSTKK) are disordered. A compositionally biased stretch (basic residues) spans 100 to 125 (AKVKPTKKAAPKTKVKTAKKTRSTKK).

It belongs to the histone H1/H5 family. HCT subfamily.

In terms of biological role, might have a role analogous to that of eukaryotic histone proteins. The sequence is that of Histone H1-like protein Hc1 (hctA) from Chlamydia trachomatis serovar D (strain ATCC VR-885 / DSM 19411 / UW-3/Cx).